We begin with the raw amino-acid sequence, 69 residues long: MSRILILLIRFYQLAISPWLAPRCRFQPTCSGYAIEAVSKHGALKGGCLAARRICRCHPWGGSGYDPVP.

This sequence belongs to the UPF0161 family.

Its subcellular location is the cell inner membrane. Its function is as follows. Could be involved in insertion of integral membrane proteins into the membrane. The polypeptide is Putative membrane protein insertion efficiency factor (Chromobacterium violaceum (strain ATCC 12472 / DSM 30191 / JCM 1249 / CCUG 213 / NBRC 12614 / NCIMB 9131 / NCTC 9757 / MK)).